The primary structure comprises 280 residues: Borealin (280 aa).

Basic residues predominate over residues 140–153 (KVAAKKPSTARRTR). Residues 140-187 (KVAAKKPSTARRTRASVGNVANTSKRTSKRGRATPSASKQAETSLLGY) are disordered.

This sequence belongs to the borealin family. Component of the CPC at least composed of survivin/birc5, incenp, cdca8/borealin and/or cdca9/dasra-A, and aurkb/aurora-B. Interacts with incenp (via N-terminus).

The protein resides in the nucleus. Its subcellular location is the chromosome. It is found in the centromere. It localises to the cytoplasm. The protein localises to the cytoskeleton. The protein resides in the spindle. Component of the chromosomal passenger complex (CPC), a complex that acts as a key regulator of mitosis. The CPC complex has essential functions at the centromere in ensuring correct chromosome alignment and segregation and is required for chromatin-induced microtubule stabilization and spindle assembly. Contributes to CPC function by facilitating loading of the CPC onto chromosomes. The sequence is that of Borealin (cdca8) from Xenopus laevis (African clawed frog).